The sequence spans 501 residues: GMP synthase [glutamine-hydrolyzing] (501 aa).

In terms of domain architecture, Glutamine amidotransferase type-1 spans 1-185 (MVLVVDYGSQ…LFNVCKLEKN (185 aa)). Cys75 (nucleophile) is an active-site residue. Active-site residues include His159 and Glu161. The GMPS ATP-PPase domain maps to 186–376 (WKIGDLVEEK…LGIPDRIINR (191 aa)). Residue 213 to 219 (SGGVDSS) coordinates ATP.

As to quaternary structure, homodimer.

The catalysed reaction is XMP + L-glutamine + ATP + H2O = GMP + L-glutamate + AMP + diphosphate + 2 H(+). The protein operates within purine metabolism; GMP biosynthesis; GMP from XMP (L-Gln route): step 1/1. In terms of biological role, catalyzes the synthesis of GMP from XMP. This is GMP synthase [glutamine-hydrolyzing] (guaA) from Thermotoga maritima (strain ATCC 43589 / DSM 3109 / JCM 10099 / NBRC 100826 / MSB8).